The chain runs to 1670 residues: Protein TASOR (1670 aa).

Positions 1–110 are disordered; sequence MATAVETEAC…QIPRKSREKK (110 aa). The residue at position 2 (Ala-2) is an N-acetylalanine. The segment covering 67-78 has biased composition (polar residues); the sequence is QSLSHEQPQDSS. Ser-344 bears the Phosphoserine mark. Residue Lys-586 forms a Glycyl lysine isopeptide (Lys-Gly) (interchain with G-Cter in SUMO2) linkage. Phosphoserine is present on residues Ser-633, Ser-636, Ser-673, and Ser-800. Glycyl lysine isopeptide (Lys-Gly) (interchain with G-Cter in SUMO2) cross-links involve residues Lys-823 and Lys-832. Residue Ser-843 is modified to Phosphoserine. Lys-872 is covalently cross-linked (Glycyl lysine isopeptide (Lys-Gly) (interchain with G-Cter in SUMO2)). Positions 921-947 are disordered; it reads TGGNARSPEDQLGKHGEKQTPGMKSPE. Phosphoserine is present on residues Ser-927, Ser-971, and Ser-979. Residues 927–938 are compositionally biased toward basic and acidic residues; it reads SPEDQLGKHGEK. Thr-982 and Thr-1049 each carry phosphothreonine. Position 1103 is a phosphoserine (Ser-1103). Basic and acidic residues predominate over residues 1532 to 1545; that stretch reads ETKGSRGTDQKKNT. Disordered regions lie at residues 1532 to 1558 and 1638 to 1670; these read ETKGSRGTDQKKNTQIELQSSPDVQNS and FLSAYTESLDRDKSPPPLSWGKSDSSRPYSQEK. Composition is skewed to polar residues over residues 1546–1558 and 1659–1670; these read QIELQSSPDVQNS and KSDSSRPYSQEK. Ser-1552 carries the phosphoserine modification.

It belongs to the TASOR family. Component of the HUSH complex; at least composed of TASOR, PPHLN1 and MPHOSPH8. Interacts with MORC2; the interaction associateS MORC2 with the HUSH complex which recruits MORC2 to heterochromatic loci. Interacts with ZNF638; leading to recruitment of the HUSH complex to unintegrated retroviral DNA. Interacts with INPP5A, EML1, SV1L, GPSM2, ITGB3BP, CNTN1, ETFA, PSMD8, S100A10, MPHOSPH8, TMEM100, ALB, PARPBP, HCFC2, NCBP1 and SETDB1.

The protein resides in the nucleus. It localises to the chromosome. Functionally, component of the HUSH complex, a multiprotein complex that mediates epigenetic repression. The HUSH complex is recruited to genomic loci rich in H3K9me3 and is required to maintain transcriptional silencing by promoting recruitment of SETDB1, a histone methyltransferase that mediates further deposition of H3K9me3, as well as MORC2. Also represses L1 retrotransposons in collaboration with MORC2 and, probably, SETDB1, the silencing is dependent of repressive epigenetic modifications, such as H3K9me3 mark. Silencing events often occur within introns of transcriptionally active genes, and lead to the down-regulation of host gene expression. The HUSH complex is also involved in the silencing of unintegrated retroviral DNA by being recruited by ZNF638: some part of the retroviral DNA formed immediately after infection remains unintegrated in the host genome and is transcriptionally repressed. Plays a crucial role in early embryonic development. Involved in the organization of spindle poles and spindle apparatus assembly during zygotic division. Plays an important role in maintaining epiblast fitness or potency. The polypeptide is Protein TASOR (Homo sapiens (Human)).